The sequence spans 204 residues: Lysozyme g (204 aa).

Positions 1–19 (MHLMLVLLGLAALLGTSQS) are cleaved as a signal peptide. 2 cysteine pairs are disulfide-bonded: Cys-23–Cys-79 and Cys-37–Cys-48. Active-site residues include Glu-92 and Asp-105.

This sequence belongs to the glycosyl hydrolase 23 family.

The protein localises to the secreted. The enzyme catalyses Hydrolysis of (1-&gt;4)-beta-linkages between N-acetylmuramic acid and N-acetyl-D-glucosamine residues in a peptidoglycan and between N-acetyl-D-glucosamine residues in chitodextrins.. Functionally, has bacteriolytic activity against M.luteus. The polypeptide is Lysozyme g (Struthio camelus (Common ostrich)).